Reading from the N-terminus, the 92-residue chain is Small ribosomal subunit protein uS19 (92 aa).

The protein belongs to the universal ribosomal protein uS19 family.

Its function is as follows. Protein S19 forms a complex with S13 that binds strongly to the 16S ribosomal RNA. The polypeptide is Small ribosomal subunit protein uS19 (Vibrio vulnificus (strain CMCP6)).